The chain runs to 127 residues: Glycine cleavage system H protein (127 aa).

In terms of domain architecture, Lipoyl-binding spans lysine 23 to glutamate 105. An N6-lipoyllysine modification is found at lysine 64.

It belongs to the GcvH family. In terms of assembly, the glycine cleavage system is composed of four proteins: P, T, L and H. (R)-lipoate is required as a cofactor.

Its function is as follows. The glycine cleavage system catalyzes the degradation of glycine. The H protein shuttles the methylamine group of glycine from the P protein to the T protein. This is Glycine cleavage system H protein from Coprothermobacter proteolyticus (strain ATCC 35245 / DSM 5265 / OCM 4 / BT).